A 256-amino-acid chain; its full sequence is Beta-fibrinogenase-like (256 aa).

Positions 1 to 18 are cleaved as a signal peptide; it reads MVLIKVLANLLVLQLSYA. A propeptide spanning residues 19-24 is cleaved from the precursor; the sequence is QKSSEL. Residues 25-247 form the Peptidase S1 domain; sequence VVGGDECNIN…YTDWIQSIIA (223 aa). 6 disulfides stabilise this stretch: cysteine 31/cysteine 161, cysteine 49/cysteine 65, cysteine 96/cysteine 254, cysteine 140/cysteine 208, cysteine 172/cysteine 187, and cysteine 198/cysteine 223. Residue asparagine 44 is glycosylated (N-linked (GlcNAc...) asparagine). The active-site Charge relay system is the histidine 64. Residues asparagine 78 and asparagine 101 are each glycosylated (N-linked (GlcNAc...) asparagine). Aspartate 108 serves as the catalytic Charge relay system. N-linked (GlcNAc...) asparagine glycosylation occurs at asparagine 152. The Charge relay system role is filled by serine 202.

Belongs to the peptidase S1 family. Snake venom subfamily. In terms of assembly, monomer. In terms of tissue distribution, expressed by the venom gland.

The protein localises to the secreted. Functionally, snake venom serine protease that has fibrinogenolytic activities by hydrolyzing the beta chain of fibrinogen (FGB). Typical arginine esterase which hydrolyzes esters and amides of arginine. In Daboia siamensis (Eastern Russel's viper), this protein is Beta-fibrinogenase-like.